Consider the following 116-residue polypeptide: MGDNTTVAPGTNQTLVEEDLGAQITHTLMVQIMSKLNEMLTEYQPQIIGIGATVLAIFVIMFISLLIILGCNCIRPYNFKNLKRYITGKASKSVEYQPLKMSAVNMGMDEDDEFLA.

Residues 1-46 (MGDNTTVAPGTNQTLVEEDLGAQITHTLMVQIMSKLNEMLTEYQPQ) lie on the Extracellular side of the membrane. N-linked (GlcNAc...) asparagine; by host glycosylation is found at Asn-4 and Asn-12. Residues 47-67 (IIGIGATVLAIFVIMFISLLI) traverse the membrane as a helical segment. At 68–116 (ILGCNCIRPYNFKNLKRYITGKASKSVEYQPLKMSAVNMGMDEDDEFLA) the chain is on the cytoplasmic side.

Its subcellular location is the host membrane. This is an uncharacterized protein from Magallana gigas (Pacific oyster).